The primary structure comprises 342 residues: Cellular tumor antigen p53 (342 aa).

The interval 1 to 35 (MEEADLTLPLSQDTFHDLWNNVFLSTENESLPPPE) is transcription activation (acidic). Residues 68 to 255 (NYAGEHGFNL…KTEEGNLEKS (188 aa)) mediate DNA binding. Residues Cys-142, His-145, Cys-201, and Cys-205 each coordinate Zn(2+). An interaction with DNA region spans residues 236–243 (RVCACPGR). Basic and acidic residues predominate over residues 244 to 256 (DRKTEEGNLEKSG). The tract at residues 244 to 287 (DRKTEEGNLEKSGTKQTKKRKSAPAPDTSTAKKSKSASSGEDED) is disordered. The short motif at 261–278 (KKRKSAPAPDTSTAKKSK) is the Bipartite nuclear localization signal element. Residues 271 to 282 (TSTAKKSKSASS) are compositionally biased toward low complexity. The interval 288–317 (KEIYTLSIRGRNRYLWFKSLNDGLELMDKT) is oligomerization. A Nuclear export signal motif is present at residues 302 to 313 (LWFKSLNDGLEL). Residues 318 to 342 (GPKIKQEIPAPSSGKRLLKGGSDSD) are disordered. A basic (repression of DNA-binding) region spans residues 319-336 (PKIKQEIPAPSSGKRLLK).

The protein belongs to the p53 family. As to quaternary structure, binds DNA as a homotetramer. It depends on Zn(2+) as a cofactor.

It localises to the cytoplasm. It is found in the nucleus. Multifunctional transcription factor that induces cell cycle arrest, DNA repair or apoptosis upon binding to its target DNA sequence. Acts as a tumor suppressor in many tumor types; induces growth arrest or apoptosis depending on the physiological circumstances and cell type. Negatively regulates cell division by controlling expression of a set of genes required for this process. One of the activated genes is an inhibitor of cyclin-dependent kinases. Apoptosis induction seems to be mediated either by stimulation of BAX and FAS antigen expression, or by repression of Bcl-2 expression. In Xiphophorus maculatus (Southern platyfish), this protein is Cellular tumor antigen p53 (tp53).